Reading from the N-terminus, the 175-residue chain is Short chain dehydrogenase/reductase dpmpG (175 aa).

Residues isoleucine 18, aspartate 71, asparagine 98, and lysine 132 each coordinate NADP(+).

It belongs to the short-chain dehydrogenases/reductases (SDR) family.

The protein operates within secondary metabolite biosynthesis; terpenoid biosynthesis. In terms of biological role, short chain dehydrogenase/reductase; part of the gene cluster that mediates the biosynthesis of diterpenoid pyrones. The first step of the pathway is the synthesis of the alpha-pyrone moiety by the polyketide synthase dpmpA via condensation of one acetyl-CoA starter unit with 3 malonyl-CoA units and 2 methylations. The alpha-pyrone is then combined with geranylgeranyl pyrophosphate (GGPP) formed by the GGPP synthase dpmpD through the action of the prenyltransferase dpmpC to yield a linear alpha-pyrone diterpenoid. Subsequent steps in the diterpenoid pyrone biosynthetic pathway involve the decalin core formation, which is initiated by the epoxidation of the C10-C11 olefin by the FAD-dependent oxidoreductase dpmpE, and is followed by a cyclization cascade catalyzed by the terpene cyclase dpmpB. The short chain dehydrogenase/reductase dpmpG then oxidizes the 8S hydroxy group to a ketone and the short chain dehydrogenase/reductase dpmpH reduces the ketone to the 8R hydroxy group to yield higginsianin B. Higginsianin B is further methylated by the methyltransferase dpmpI to produce the intermediate named FDDP B. The cytochrome P450 monooxygenase dpmpJ then oxidizes the C-26 methyl to primary alcohol, producing the final diterpenoid pyrone with a C-26 primary alcohol on the gamma-pyrone moiety named FDDP C. The chain is Short chain dehydrogenase/reductase dpmpG from Macrophomina phaseolina (strain MS6) (Charcoal rot fungus).